The following is a 206-amino-acid chain: Ectodysplasin-A receptor-associated adapter protein (206 aa).

2 disordered regions span residues methionine 1–proline 36 and threonine 52–proline 77. 2 stretches are compositionally biased toward polar residues: residues proline 24–aspartate 33 and threonine 52–lysine 62. The Death domain maps to aspartate 114–valine 190.

In terms of assembly, self-associates and binds to EDAR, TRAF1, TRAF2 and TRAF3.

It is found in the cytoplasm. Its function is as follows. Adapter protein that interacts with EDAR DEATH domain and couples the receptor to EDA signaling pathway during morphogenesis of ectodermal organs. Mediates the activation of NF-kappa-B. The sequence is that of Ectodysplasin-A receptor-associated adapter protein (EDARADD) from Macaca fascicularis (Crab-eating macaque).